A 1117-amino-acid polypeptide reads, in one-letter code: Zinc finger E-box-binding homeobox 1 (1117 aa).

Disordered stretches follow at residues 1–103 (MADG…QNHD) and 122–143 (APEE…NGTP). Low complexity predominate over residues 15 to 30 (PRRNNVTNYNTVVEAN). Phosphoserine occurs at positions 31 and 33. Residues 150–173 (LTCPYCDRGYKRFTSLKEHIKYRH) form a C2H2-type 1 zinc finger. Residues K166 and K175 each participate in a glycyl lysine isopeptide (Lys-Gly) (interchain with G-Cter in SUMO2) cross-link. 2 C2H2-type zinc fingers span residues 180–202 (FSCS…MTSH) and 220–242 (FKCT…LRIH). The segment at 248 to 272 (YECPNCKKRFSHSGSYSSHISSKKC) adopts a C2H2-type 4; atypical zinc-finger fold. Positions 278–307 (VNGRPRSGLKTSQCSSPSLSTSPGSPTRPQ) are disordered. Residue K287 forms a Glycyl lysine isopeptide (Lys-Gly) (interchain with G-Cter in SUMO2) linkage. A compositionally biased stretch (low complexity) spans 288–304 (TSQCSSPSLSTSPGSPT). 2 positions are modified to phosphoserine: S293 and S302. Residues K311 and K315 each participate in a glycyl lysine isopeptide (Lys-Gly) (interchain with G-Cter in SUMO2) cross-link. K327 participates in a covalent cross-link: Glycyl lysine isopeptide (Lys-Gly) (interchain with G-Cter in SUMO); alternate. K327 participates in a covalent cross-link: Glycyl lysine isopeptide (Lys-Gly) (interchain with G-Cter in SUMO2); alternate. Residues K419, K473, K484, K495, and K528 each participate in a glycyl lysine isopeptide (Lys-Gly) (interchain with G-Cter in SUMO2) cross-link. 3 disordered regions span residues 476 to 501 (IPAP…TDKS), 528 to 566 (KHYD…SQPP), and 613 to 687 (GQIP…SPLN). Positions 484-501 (KSEKLPEDLTVKSETDKS) are enriched in basic and acidic residues. The homeobox; atypical DNA-binding region spans 559–618 (DLSPSQPPLKNLLSLLKAYYALNAQPSTEELSKIADSVNLPLDGVKKWFEKMQAGQIPGQ). 4 positions are modified to phosphoserine: S657, S664, S671, and S678. Residues 673-687 (MNGSRSCTSSPSPLN) are compositionally biased toward polar residues. T680 is modified (phosphothreonine). Phosphoserine is present on S682. Residue K752 forms a Glycyl lysine isopeptide (Lys-Gly) (interchain with G-Cter in SUMO); alternate linkage. K752 participates in a covalent cross-link: Glycyl lysine isopeptide (Lys-Gly) (interchain with G-Cter in SUMO2); alternate. The disordered stretch occupies residues 834–876 (PPVKVIQPNGNQDERQDTSSEGVSTVEDQNDSDSTPPKKKTRK). Polar residues predominate over residues 852–868 (SSEGVSTVEDQNDSDST). 2 consecutive C2H2-type zinc fingers follow at residues 882 to 904 (YACD…KYEH) and 910 to 932 (HECG…MRLH). Residues 938-959 (YQCDKCGKRFSHSGSYSQHMNH) form a C2H2-type 7; atypical zinc finger. The disordered stretch occupies residues 991–1117 (EHVGARASPS…QLSEEKTNEA (127 aa)). Acidic residues-rich tracts occupy residues 1013 to 1032 (EEDE…MEEL), 1042 to 1069 (QGEE…DEAE), and 1098 to 1109 (SEMESESESEQL).

This sequence belongs to the delta-EF1/ZFH-1 C2H2-type zinc-finger family. In terms of assembly, interacts (via N-terminus) with SMARCA4/BRG1. Ubiquitinated, leading to degradation in a proteasome-dependent manner. Deubiquitinated by USP51, leading to stabilization. As to expression, expressed in the external germinal layer (EGL) and internal granular layer (IGL) of the cerebellum (at protein level).

The protein resides in the nucleus. Acts as a transcriptional repressor. Binds to E-box sequences in the immunoglobulin heavy chain enhancer as well as in the regulatory regions of many other tissue-specific genes. Represses E-cadherin promoter and induces an epithelial-mesenchymal transition (EMT) by recruiting SMARCA4/BRG1. Represses BCL6 transcription in the presence of the corepressor CTBP1. Positively regulates neuronal differentiation. Represses RCOR1 transcription activation during neurogenesis. Represses transcription by binding to the E box (5'-CANNTG-3'). In the absence of TGFB1, acts as a repressor of COL1A2 transcription via binding to the E-box in the upstream enhancer region. Promotes tumorigenicity by repressing stemness-inhibiting microRNAs. This Mus musculus (Mouse) protein is Zinc finger E-box-binding homeobox 1.